Consider the following 204-residue polypeptide: Glycerol-3-phosphate acyltransferase (204 aa).

The next 5 helical transmembrane spans lie at 8 to 28 (ILIF…CYIF), 53 to 73 (VLAA…VVIA), 81 to 101 (FITA…IFFG), 116 to 136 (FGFS…VAII), and 155 to 175 (VIFT…IIIL).

This sequence belongs to the PlsY family. As to quaternary structure, probably interacts with PlsX.

It is found in the cell inner membrane. The catalysed reaction is an acyl phosphate + sn-glycerol 3-phosphate = a 1-acyl-sn-glycero-3-phosphate + phosphate. It functions in the pathway lipid metabolism; phospholipid metabolism. Functionally, catalyzes the transfer of an acyl group from acyl-phosphate (acyl-PO(4)) to glycerol-3-phosphate (G3P) to form lysophosphatidic acid (LPA). This enzyme utilizes acyl-phosphate as fatty acyl donor, but not acyl-CoA or acyl-ACP. The protein is Glycerol-3-phosphate acyltransferase of Francisella tularensis subsp. holarctica (strain OSU18).